We begin with the raw amino-acid sequence, 804 residues long: Phenylalanine--tRNA ligase beta subunit (804 aa).

Residues 40-155 (GEGIKGVVIG…GDAETGADAL (116 aa)) form the tRNA-binding domain. A B5 domain is found at 409 to 484 (IKENVIRLSV…RLYGYDNIPS (76 aa)). 4 residues coordinate Mg(2+): Asp462, Asp468, Glu471, and Glu472. The FDX-ACB domain occupies 710–803 (PKYPSVTRDI…LEDKYQAVLR (94 aa)).

This sequence belongs to the phenylalanyl-tRNA synthetase beta subunit family. Type 1 subfamily. Tetramer of two alpha and two beta subunits. Requires Mg(2+) as cofactor.

The protein localises to the cytoplasm. The enzyme catalyses tRNA(Phe) + L-phenylalanine + ATP = L-phenylalanyl-tRNA(Phe) + AMP + diphosphate + H(+). This is Phenylalanine--tRNA ligase beta subunit from Bacillus licheniformis (strain ATCC 14580 / DSM 13 / JCM 2505 / CCUG 7422 / NBRC 12200 / NCIMB 9375 / NCTC 10341 / NRRL NRS-1264 / Gibson 46).